The chain runs to 309 residues: Aspartate carbamoyltransferase catalytic subunit (309 aa).

Positions 55 and 56 each coordinate carbamoyl phosphate. Residue lysine 85 participates in L-aspartate binding. Carbamoyl phosphate contacts are provided by arginine 106, histidine 135, and glutamine 138. Residues arginine 168 and arginine 230 each coordinate L-aspartate. Residues leucine 268 and proline 269 each contribute to the carbamoyl phosphate site.

It belongs to the aspartate/ornithine carbamoyltransferase superfamily. ATCase family. As to quaternary structure, heterododecamer (2C3:3R2) of six catalytic PyrB chains organized as two trimers (C3), and six regulatory PyrI chains organized as three dimers (R2).

It catalyses the reaction carbamoyl phosphate + L-aspartate = N-carbamoyl-L-aspartate + phosphate + H(+). The protein operates within pyrimidine metabolism; UMP biosynthesis via de novo pathway; (S)-dihydroorotate from bicarbonate: step 2/3. Functionally, catalyzes the condensation of carbamoyl phosphate and aspartate to form carbamoyl aspartate and inorganic phosphate, the committed step in the de novo pyrimidine nucleotide biosynthesis pathway. The chain is Aspartate carbamoyltransferase catalytic subunit from Wigglesworthia glossinidia brevipalpis.